Consider the following 736-residue polypeptide: MSNEQKCPFSGTHGARTTVGTQSNRDWWPKVLNLNILHQHAPAANPMDADFDYSETFKTLDFGALKQDLYALMTTSQDWWPADWGHYGGLFIRMAWHSAGTYRTGDGRGGAGTGNQRFAPINSWPDNGNLDKARRLLWPIKQKYGNKISWADLMILAGNCALESMGFKTFGFGGGRVDIWQPEEDIYWGAEREWLATSDKPNSRYSGERNLDNPLAAVQMGLIYVNPEGPDGNPDPVASGRDIRETFARMAMNDEETVALTAGGHTFGKAHGAGDPALVGPEPEAAPIEEQGLGWINKFGSGKGIHATTSGIEGAWKPNPTKWDNGYFDMLFGYEWELTRSPAGAKQWVAKDCKPEHLIPDAHDPSKKHPPMMTTADLAMRFDPIYGPISRRFHQDPAAFADAFARAWFKLTHRDLGPKARYLGPEVPAEDLVWQDPIPAVDHPLIEVTDVASLKAKLLASGLSTAELVSTAWASASTFRGSDKRGGANGARIRLAPQKDWAANQPAQLAKVLGVLEGIQQAFNSAQTGGKKVSLADLIVLGGCAAVEAAAKAAGFAVAVPFTPGRTDASQEQTDAESIAVLEPEADGFRNYQKKTYSVSAEEMLVDKAQLLTLSAPEMTVLVGGLRVLGGNVGGSSDGVFTTTPGTLSNDFFVNLLDMGTVWKPAAESAGRYEGRDRQTGVAKWTASRVDLIFGSNSQLRALAEVYAQNDAQEKFVRDFIAAWSKVMELDRFDLK.

The tract at residues 1 to 21 is disordered; it reads MSNEQKCPFSGTHGARTTVGT. A cross-link (tryptophyl-tyrosyl-methioninium (Trp-Tyr) (with M-250)) is located at residues 96–224; that stretch reads WHSAGTYRTG…LAAVQMGLIY (129 aa). Catalysis depends on His-97, which acts as the Proton acceptor. The tryptophyl-tyrosyl-methioninium (Tyr-Met) (with W-96) cross-link spans 224-250; that stretch reads YVNPEGPDGNPDPVASGRDIRETFARM. Residue His-265 coordinates heme b.

It belongs to the peroxidase family. Peroxidase/catalase subfamily. As to quaternary structure, homodimer or homotetramer. Heme b is required as a cofactor. Formation of the three residue Trp-Tyr-Met cross-link is important for the catalase, but not the peroxidase activity of the enzyme.

It catalyses the reaction H2O2 + AH2 = A + 2 H2O. It carries out the reaction 2 H2O2 = O2 + 2 H2O. Its function is as follows. Bifunctional enzyme with both catalase and broad-spectrum peroxidase activity. This is Catalase-peroxidase from Dechloromonas aromatica (strain RCB).